Reading from the N-terminus, the 285-residue chain is Vacuolar protein sorting-associated protein 37B (285 aa).

The tract at residues 50 to 170 is interaction with IST1; it reads ASNRSLAEGN…EMVLKGQRLP (121 aa). The VPS37 C-terminal domain maps to 84 to 173; that stretch reads FEAYQIKKTK…LKGQRLPQAL (90 aa). The segment at 175-201 is disordered; that stretch reads PLPPRLPELAPTAPLPYPAPEASGPPA. An Omega-N-methylarginine modification is found at Arg218. Residues 230-285 form a disordered region; that stretch reads GQAVPYPGLQCPPLPPRVGLPTQQGFSSQFVSPYPPPLPQRPPPRLPPHQPGFILQ. Polar residues predominate over residues 250–260; that stretch reads PTQQGFSSQFV. Positions 262–279 are enriched in pro residues; it reads PYPPPLPQRPPPRLPPHQ.

Belongs to the VPS37 family. Component of the ESCRT-I complex (endosomal sorting complex required for transport I) which consists of TSG101, VPS28, a VPS37 protein (VPS37A to -D) and MVB12A or MVB12B in a 1:1:1:1 stoichiometry. Interacts with TSG101, VPS28, MVB12A and MVB12B. Component of the ESCRT-I complex (endosomal sorting complex required for transport I) which consists of TSG101, VPS28, a VPS37 protein (VPS37A to -D) and UBAP1 in a 1:1:1:1 stoichiometry. Interacts with CEP55. Interacts with IST1. Widely expressed. Expressed in macrophages and lymphocytes.

The protein localises to the late endosome membrane. Its function is as follows. Component of the ESCRT-I complex, a regulator of vesicular trafficking process. Required for the sorting of endocytic ubiquitinated cargos into multivesicular bodies. May be involved in cell growth and differentiation. This Homo sapiens (Human) protein is Vacuolar protein sorting-associated protein 37B (VPS37B).